A 366-amino-acid polypeptide reads, in one-letter code: MKSKYSIFCMFLLRGFIFLGTVFSLNSAELRLKDIARIEGVRENQITGYGIVVGLPGTGDSKTPFTSESMKNYLKNLGVEANLKPDQTRNIASVLITATIPTYSRKGDKLNVVVSSIGDAKSLEGGVLLQSPLKTAGDKTYAVASGVISFGGRQEQERGSSSRGNKKTVGVVHGGAIVEQELDQNFYASERVQIQLENQDFTTLNAIVSKIRSILPGKHGIGPESVVPISPSEINIVLGKSFENKSDAFLTLLSDIENLTVETQTKPKVVINERTGVIVMGGNITIEEVAVSRSGLNLSVTDKNRRRNWLGKEQEPTKSSFLIEESTSVGDVVEALNKVGASTKDIIAILEALKKSGALHAELEIQ.

Positions M1–S27 are cleaved as a signal peptide.

Belongs to the FlgI family. The basal body constitutes a major portion of the flagellar organelle and consists of four rings (L,P,S, and M) mounted on a central rod.

The protein resides in the periplasm. Its subcellular location is the bacterial flagellum basal body. Functionally, assembles around the rod to form the L-ring and probably protects the motor/basal body from shearing forces during rotation. The sequence is that of Flagellar P-ring protein from Leptospira interrogans serogroup Icterohaemorrhagiae serovar copenhageni (strain Fiocruz L1-130).